The primary structure comprises 105 residues: TPR repeat-containing protein PA0015 (105 aa).

TPR repeat units follow at residues 17–50 and 52–84; these read ALLR…DPKY and AGWK…AATH.

The polypeptide is TPR repeat-containing protein PA0015 (Pseudomonas aeruginosa (strain ATCC 15692 / DSM 22644 / CIP 104116 / JCM 14847 / LMG 12228 / 1C / PRS 101 / PAO1)).